A 973-amino-acid chain; its full sequence is Sodium/calcium exchanger 1 (973 aa).

A signal peptide spans 1 to 35 (MYNMRRLSLSPTFSMGFHLLVTVSLLFSHVDHVIA). Residues 36–74 (ETEMEGEGNETGECTGSYYCKKGVILPIWEPQDPSFGDK) are Extracellular-facing. N44 is a glycosylation site (N-linked (GlcNAc...) asparagine). Residues 75 to 95 (IARATVYFVAMVYMFLGVSII) form a helical membrane-spanning segment. The Cytoplasmic portion of the chain corresponds to 96–136 (ADRFMSSIEVITSQEKEITIKKPNGETTKTTVRIWNETVSN). A helical membrane pass occupies residues 137 to 157 (LTLMALGSSAPEILLSVIEVC). One copy of the Alpha-1 repeat lies at 141-181 (ALGSSAPEILLSVIEVCGHNFTAGDLGPSTIVGSAAFNMFI). The Extracellular segment spans residues 158–170 (GHNFTAGDLGPST). N-linked (GlcNAc...) asparagine glycosylation is present at N160. Residues 171–191 (IVGSAAFNMFIIIALCVYVVP) form a helical membrane-spanning segment. At 192 to 204 (DGETRKIKHLRVF) the chain is on the cytoplasmic side. Residues 205-225 (FVTAAWSIFAYTWLYIILSVI) traverse the membrane as a helical segment. The Extracellular segment spans residues 226 to 231 (SPGVVE). Residues 232–252 (VWEGLLTFFFFPICVVFAWVA) form a helical membrane-spanning segment. Over 253–800 (DRRLLFYKYV…FVPPTEYWNG (548 aa)) the chain is Cytoplasmic. A putative calmodulin-binding region region spans residues 254–273 (RRLLFYKYVYKRYRAGKQRG). 2 positions are modified to phosphoserine: S285 and S392. Calx-beta domains lie at 396-496 (VNTE…VHLS) and 527-627 (ATVT…LEIG). Residues E420, D456, D481, D482, I484, E486, E489, D533, D534, D535, E551, D587, D613, E614, E615, and E718 each contribute to the Ca(2+) site. A helical membrane pass occupies residues 801–821 (WACFIVSILMIGLLTAFIGDL). Topologically, residues 822–824 (ASH) are extracellular. Residues 825–845 (FGCTIGLKDSVTAVVFVALGT) form a helical membrane-spanning segment. The stretch at 842–878 (ALGTSVPDTFASKVAATQDQYADASIGNVTGSNAVNV) is one Alpha-2 repeat. At 846–874 (SVPDTFASKVAATQDQYADASIGNVTGSN) the chain is on the cytoplasmic side. Residues 875 to 895 (AVNVFLGIGVAWSIAAIYHAA) traverse the membrane as a helical segment. Topologically, residues 896–906 (NGEQFKVSPGT) are extracellular. The helical transmembrane segment at 907 to 927 (LAFSVTLFTIFAFINVGVLLY) threads the bilayer. At 928 to 944 (RRRPEIGGELGGPRTAK) the chain is on the cytoplasmic side. The chain crosses the membrane as a helical span at residues 945 to 965 (LLTSCLFVLLWLLYIFFSSLE). The Extracellular segment spans residues 966-973 (AYCHIKGF).

This sequence belongs to the Ca(2+):cation antiporter (CaCA) (TC 2.A.19) family. SLC8 subfamily. In terms of tissue distribution, detected primarily in heart and at lower levels in brain. Expressed in cardiac sarcolemma, brain, kidney, liver, pancreas, skeletal muscle, placenta and lung.

It localises to the cell membrane. It catalyses the reaction Ca(2+)(in) + 3 Na(+)(out) = Ca(2+)(out) + 3 Na(+)(in). Its activity is regulated as follows. Activated by micromolar levels of Ca(2+). Mediates the exchange of one Ca(2+) ion against three to four Na(+) ions across the cell membrane, and thereby contributes to the regulation of cytoplasmic Ca(2+) levels and Ca(2+)-dependent cellular processes. Contributes to Ca(2+) transport during excitation-contraction coupling in muscle. In a first phase, voltage-gated channels mediate the rapid increase of cytoplasmic Ca(2+) levels due to release of Ca(2+) stores from the endoplasmic reticulum. SLC8A1 mediates the export of Ca(2+) from the cell during the next phase, so that cytoplasmic Ca(2+) levels rapidly return to baseline. Required for normal embryonic heart development and the onset of heart contractions. This chain is Sodium/calcium exchanger 1 (SLC8A1), found in Homo sapiens (Human).